The sequence spans 92 residues: Small ribosomal subunit protein uS19c (92 aa).

Belongs to the universal ribosomal protein uS19 family.

Its subcellular location is the plastid. It is found in the chloroplast. Functionally, protein S19 forms a complex with S13 that binds strongly to the 16S ribosomal RNA. The protein is Small ribosomal subunit protein uS19c of Adiantum capillus-veneris (Maidenhair fern).